Here is a 555-residue protein sequence, read N- to C-terminus: Glucose-6-phosphate isomerase (555 aa).

The active-site Proton donor is the Glu356. Catalysis depends on residues His387 and Lys515.

Belongs to the GPI family.

It localises to the cytoplasm. It carries out the reaction alpha-D-glucose 6-phosphate = beta-D-fructose 6-phosphate. The protein operates within carbohydrate biosynthesis; gluconeogenesis. It functions in the pathway carbohydrate degradation; glycolysis; D-glyceraldehyde 3-phosphate and glycerone phosphate from D-glucose: step 2/4. Catalyzes the reversible isomerization of glucose-6-phosphate to fructose-6-phosphate. In Desulforapulum autotrophicum (strain ATCC 43914 / DSM 3382 / VKM B-1955 / HRM2) (Desulfobacterium autotrophicum), this protein is Glucose-6-phosphate isomerase.